A 377-amino-acid polypeptide reads, in one-letter code: Subtilisin-like protease CPC735_012930 (377 aa).

A signal peptide spans 1–20 (MSILFKIFASTLAVVSVVNA). Residues 21 to 118 (GELLNFENER…VEPDRMASAT (98 aa)) constitute a propeptide that is removed on maturation. The Inhibitor I9 domain maps to 36-114 (SYIVVMKDGT…HVKYVEPDRM (79 aa)). In terms of domain architecture, Peptidase S8 spans 128 to 377 (SWGLGRISHT…NKLLYNKSGF (250 aa)). Residues Asp-160 and His-191 each act as charge relay system in the active site. A glycan (N-linked (GlcNAc...) asparagine) is linked at Asn-252. Ser-323 serves as the catalytic Charge relay system. N-linked (GlcNAc...) asparagine glycosylation is found at Asn-364 and Asn-373.

Belongs to the peptidase S8 family.

It is found in the secreted. Secreted subtilisin-like serine protease with keratinolytic activity that contributes to pathogenicity. This chain is Subtilisin-like protease CPC735_012930, found in Coccidioides posadasii (strain C735) (Valley fever fungus).